A 240-amino-acid polypeptide reads, in one-letter code: Cysteine-rich secretory protein (240 aa).

A signal peptide spans 1–19 (MIAFIVLPILAAVLQQSSG). Residues 38–166 (VDLHNSLRRS…EYSYFYVCQY (129 aa)) enclose the SCP domain. 8 cysteine pairs are disulfide-bonded: cysteine 75-cysteine 153, cysteine 92-cysteine 167, cysteine 148-cysteine 164, cysteine 186-cysteine 193, cysteine 189-cysteine 198, cysteine 202-cysteine 235, cysteine 211-cysteine 229, and cysteine 220-cysteine 233. The ShKT domain occupies 202-235 (CTKEDKYSNCKSLVQQAGCQDKQMQSDCSAICFC).

Belongs to the CRISP family. Expressed by the venom gland.

It localises to the secreted. In terms of biological role, weakly blocks contraction of smooth muscle elicited by high potassium-induced depolarization, but does not block caffeine-stimulated contraction. May target voltage-gated calcium channels on smooth muscle. The protein is Cysteine-rich secretory protein of Crotalus adamanteus (Eastern diamondback rattlesnake).